A 188-amino-acid chain; its full sequence is MILIVGLGNPGKQYEQTRHNIGFDVIDYMANKYNIDVNREKFKGICGEGFIENKKVILLKPLTYMNLSGESIRELANFYKLEDDEIIVVYDDISLDIGRLRIREKGSAGGHNGIKSIIQNLGGDKFPRVKVGVGQPKDNLVNHVLGKFSKEDREHIEKVIPVVSDAIVEIVKNDAKESMNKFNGVNIE.

Tyr14 contacts tRNA. Residue His19 is the Proton acceptor of the active site. Residues Tyr64, Asn66, and Asn112 each contribute to the tRNA site.

It belongs to the PTH family. In terms of assembly, monomer.

The protein localises to the cytoplasm. The catalysed reaction is an N-acyl-L-alpha-aminoacyl-tRNA + H2O = an N-acyl-L-amino acid + a tRNA + H(+). In terms of biological role, hydrolyzes ribosome-free peptidyl-tRNAs (with 1 or more amino acids incorporated), which drop off the ribosome during protein synthesis, or as a result of ribosome stalling. Catalyzes the release of premature peptidyl moieties from peptidyl-tRNA molecules trapped in stalled 50S ribosomal subunits, and thus maintains levels of free tRNAs and 50S ribosomes. The chain is Peptidyl-tRNA hydrolase from Clostridium perfringens (strain ATCC 13124 / DSM 756 / JCM 1290 / NCIMB 6125 / NCTC 8237 / Type A).